The sequence spans 1001 residues: E3 ubiquitin-protein ligase BRE1B (1001 aa).

Residues Met1–Thr31 form a disordered region. Basic and acidic residues predominate over residues Pro18 to Thr28. The residue at position 20 (Lys20) is an N6-acetyllysine. Ser42 is subject to Phosphoserine. Positions Glu45–Leu91 form a coiled coil. The interval Gly116 to Pro149 is disordered. 2 coiled-coil regions span residues Ala228–Leu377 and Leu437–Ser523. N6-acetyllysine occurs at positions 355 and 517. The disordered stretch occupies residues Gly516–Arg646. Polar residues predominate over residues Ala520–Asn531. Ser528 is subject to Phosphoserine. Residues Lys578 and Lys579 each participate in a glycyl lysine isopeptide (Lys-Gly) (interchain with G-Cter in SUMO2) cross-link. Ser585 carries the post-translational modification Phosphoserine. 2 stretches are compositionally biased toward basic and acidic residues: residues Arg602–Gly619 and Arg633–Arg646. The stretch at Val627–Leu946 forms a coiled coil. The RING-type zinc finger occupies Cys948–Asn987.

The protein belongs to the BRE1 family. In terms of assembly, component of the RNF20/40 complex (also known as BRE1 complex) probably composed of 2 copies of RNF20/BRE1A and 2 copies of RNF40/BRE1B. Interacts with UBE2E1/UBCH6. Interacts with RB1 and WAC.

It localises to the nucleus. It catalyses the reaction S-ubiquitinyl-[E2 ubiquitin-conjugating enzyme]-L-cysteine + [acceptor protein]-L-lysine = [E2 ubiquitin-conjugating enzyme]-L-cysteine + N(6)-ubiquitinyl-[acceptor protein]-L-lysine.. The protein operates within protein modification; protein ubiquitination. In terms of biological role, component of the RNF20/40 E3 ubiquitin-protein ligase complex that mediates monoubiquitination of 'Lys-120' of histone H2B (H2BK120ub1). H2BK120ub1 gives a specific tag for epigenetic transcriptional activation and is also prerequisite for histone H3 'Lys-4' and 'Lys-79' methylation (H3K4me and H3K79me, respectively). It thereby plays a central role in histone code and gene regulation. The RNF20/40 complex forms a H2B ubiquitin ligase complex in cooperation with the E2 enzyme UBE2A or UBE2B; reports about the cooperation with UBE2E1/UBCH are contradictory. Required for transcriptional activation of Hox genes. The chain is E3 ubiquitin-protein ligase BRE1B (RNF40) from Macaca fascicularis (Crab-eating macaque).